A 161-amino-acid chain; its full sequence is Ecotin (161 aa).

An N-terminal signal peptide occupies residues 1-23 (MGNFTVRATAGLMLASLSTLAHA). An intrachain disulfide couples cysteine 69 to cysteine 106.

Belongs to the protease inhibitor I11 (ecotin) family. As to quaternary structure, homodimer.

It is found in the periplasm. In terms of biological role, general inhibitor of family S1 serine proteases. This chain is Ecotin, found in Pseudomonas fluorescens (strain Pf0-1).